A 265-amino-acid polypeptide reads, in one-letter code: Inositol-1-monophosphatase (265 aa).

Mg(2+) is bound by residues glutamate 69, aspartate 87, isoleucine 89, and aspartate 90. Glutamate 69 serves as a coordination point for substrate. Residues 89–92 (IDGT), arginine 185, and aspartate 214 contribute to the substrate site. Aspartate 214 lines the Mg(2+) pocket.

Belongs to the inositol monophosphatase superfamily. Requires Mg(2+) as cofactor.

The enzyme catalyses a myo-inositol phosphate + H2O = myo-inositol + phosphate. It catalyses the reaction a ribonucleoside 5'-phosphate + H2O = a ribonucleoside + phosphate. Functionally, hydrolyzes myo-inositol monophosphate. Catalyzes the dephosphorylation of GMP and IMP. The polypeptide is Inositol-1-monophosphatase (Bacillus subtilis (strain 168)).